A 239-amino-acid polypeptide reads, in one-letter code: MPEFELYVEDRQVVTPGELLARGQVIASEGTYTSGDEVYSKVTGLVDIDGRRIRVIPLAGPYRPSPGDFVVGIVEEVKFSSWLIDVRAPLPAILHVSNALEEEVDLIETDLSRYYRPGDVITAVVREVDPVQRVELSLLEDDAPTRLGRLQGGQVVEIDPVKVPRVIGRKGSMIKMLKRVLGCDIVVGANGRIYVRAREEPKKERELLAVRAIREIERRSHLRGLTDWLKANLKRLSRW.

One can recognise an S1 motif domain in the interval 67–139 (GDFVVGIVEE…PVQRVELSLL (73 aa)). A KH domain is found at 151–217 (QGGQVVEIDP…LAVRAIREIE (67 aa)).

Belongs to the RRP4 family. Component of the archaeal exosome complex. Forms a trimer of Rrp4 and/or Csl4 subunits. The trimer associates with a hexameric ring-like arrangement composed of 3 Rrp41-Rrp42 heterodimers.

Its subcellular location is the cytoplasm. Non-catalytic component of the exosome, which is a complex involved in RNA degradation. Increases the RNA binding and the efficiency of RNA degradation. Confers strong poly(A) specificity to the exosome. The chain is Exosome complex component Rrp4 from Methanopyrus kandleri (strain AV19 / DSM 6324 / JCM 9639 / NBRC 100938).